The following is a 23-amino-acid chain: Potassium channel toxin kappa-KTx 1.2 (23 aa).

2 disulfides stabilise this stretch: C4–C22 and C8–C18. The residue at position 22 (C22) is a Cysteine amide.

The protein belongs to the short scorpion toxin superfamily. Potassium channel inhibitor kappa-KTx family. Kappa-KTx 1 subfamily. Post-translationally, the two disulfide isomers globular (C1-C3, C2-C4) and beads (C1-C2, C3-C4) do not show activity on Kv10.1/KCNH1/EAG1. Expressed by the venom gland.

The protein resides in the secreted. In terms of biological role, shows weak blocking activity on voltage-gated potassium channels Kv10.1/KCNH1/EAG1 (IC(50)=26 uM), Kv1.2/KCNA2 (Kd=150 uM), Kv1.3/KCNA3 (Kd=40 uM), Kv1.6/KCNA3 (16.6% inhibition at 40 uM toxin). The block is dose-dependent, voltage-independent, and reversible. Also shows a weak inhibitory activity on the plant pathogen F.culmorum growth (IC(50)=18.8-37.7 uM). The chain is Potassium channel toxin kappa-KTx 1.2 from Chersonesometrus fulvipes (Indian black scorpion).